The chain runs to 130 residues: uncharacterized protein (130 aa).

This is an uncharacterized protein from Schizosaccharomyces pombe (strain 972 / ATCC 24843) (Fission yeast).